Reading from the N-terminus, the 431-residue chain is Lipid storage droplets surface-binding protein 1 (431 aa).

Residues 397–431 (KVTGSDGGNSNHRSSRRRQDPNHYSATHNNINGVY) are disordered. Positions 418-431 (NHYSATHNNINGVY) are enriched in polar residues.

The protein belongs to the perilipin family.

The protein resides in the cytoplasm. Its subcellular location is the lipid droplet. Its function is as follows. Required for normal deposition of neutral lipids in the oocyte. The chain is Lipid storage droplets surface-binding protein 1 from Drosophila melanogaster (Fruit fly).